The chain runs to 257 residues: Phosphatidylglycerol--prolipoprotein diacylglyceryl transferase (257 aa).

4 helical membrane passes run 8-28, 48-68, 84-104, and 109-129; these read IFGL…ILAY, VFIV…VIFN, EGGL…YLMS, and LNFL…QAIG. Arginine 130 contacts a 1,2-diacyl-sn-glycero-3-phospho-(1'-sn-glycerol). 3 helical membrane-spanning segments follow: residues 169–189, 196–216, and 225–245; these read PTFL…LLIT, GSIF…IEGL, and SLRM…ILII.

The protein belongs to the Lgt family.

It localises to the cell membrane. It catalyses the reaction L-cysteinyl-[prolipoprotein] + a 1,2-diacyl-sn-glycero-3-phospho-(1'-sn-glycerol) = an S-1,2-diacyl-sn-glyceryl-L-cysteinyl-[prolipoprotein] + sn-glycerol 1-phosphate + H(+). Its pathway is protein modification; lipoprotein biosynthesis (diacylglyceryl transfer). Catalyzes the transfer of the diacylglyceryl group from phosphatidylglycerol to the sulfhydryl group of the N-terminal cysteine of a prolipoprotein, the first step in the formation of mature lipoproteins. The chain is Phosphatidylglycerol--prolipoprotein diacylglyceryl transferase from Clostridium novyi (strain NT).